The sequence spans 471 residues: Cysteine--tRNA ligase (471 aa).

A Zn(2+)-binding site is contributed by C29. Residues 31 to 41 (LTVQSEPHVGH) carry the 'HIGH' region motif. Positions 215, 240, and 244 each coordinate Zn(2+). The 'KMSKS' region signature appears at 271–275 (KMSKS). K274 is an ATP binding site.

It belongs to the class-I aminoacyl-tRNA synthetase family. Monomer. Zn(2+) is required as a cofactor.

The protein resides in the cytoplasm. The catalysed reaction is tRNA(Cys) + L-cysteine + ATP = L-cysteinyl-tRNA(Cys) + AMP + diphosphate. This chain is Cysteine--tRNA ligase, found in Nocardioides sp. (strain ATCC BAA-499 / JS614).